We begin with the raw amino-acid sequence, 102 residues long: Mini zinc finger protein 1 (102 aa).

Residues 1-13 (MMKKRQMVIKQRS) are compositionally biased toward basic residues. The disordered stretch occupies residues 1–34 (MMKKRQMVIKQRSRNSNTSSSWTTTSSSSSSSEI). Residues 14 to 32 (RNSNTSSSWTTTSSSSSSS) are compositionally biased toward low complexity. Residues 39 to 88 (YVECQKNHAANIGGYAVDGCREFMAAGVEGTVDALRCAACGCHRNFHRKE) form a ZF-HD dimerization-type; degenerate zinc finger.

Homo- and heterodimers. Interacts with ZHD1, ZHD5, ZHD6, ZHD7, ZHD8, ZHD10 and ZHD13. In terms of tissue distribution, mostly expressed in roots and stems, present in siliques and seedlings, and weakly observed in petioles, leaves and flowers.

The protein resides in the cytoplasm. In terms of biological role, inhibits zinc finger homeodomain (ZHD) transcription factors, such as ZHD5, by interacting with them to prevent both their nuclear localization and their DNA-binding properties. Involved in integrating signals from multiple hormones by preventing the expression of genes involved in gibberellic acid (GA), auxin and brassinosteroid signaling and by promoting the expression of abscisic acid (ABA)-responsive genes. Regulates several development aspects, including photomorphogenesis, apical dominance, longevity, flower morphology and fertility, as well as root and stem elongation. Promotes the formation of ectopic shoot meristems on leaf margins. This is Mini zinc finger protein 1 (MIF1) from Arabidopsis thaliana (Mouse-ear cress).